Reading from the N-terminus, the 185-residue chain is NEDD8-conjugating enzyme UBE2F (185 aa).

The tract at residues Met1–Ser21 is disordered. The segment at Met1–Arg29 is interaction with uba3. In terms of domain architecture, UBC core spans Val32–Arg185. The active-site Glycyl thioester intermediate is Cys116.

The protein belongs to the ubiquitin-conjugating enzyme family. UBE2F subfamily.

It catalyses the reaction [E1 NEDD8-activating enzyme]-S-[NEDD8 protein]-yl-L-cysteine + [E2 NEDD8-conjugating enzyme]-L-cysteine = [E1 NEDD8-activating enzyme]-L-cysteine + [E2 NEDD8-conjugating enzyme]-S-[NEDD8-protein]-yl-L-cysteine.. The protein operates within protein modification; protein neddylation. Functionally, accepts the ubiquitin-like protein NEDD8 from the UBA3-NAE1 E1 complex and catalyzes its covalent attachment to other proteins. Together with the E3 ubiquitin ligase rnf7/rbx2, specifically neddylates cullin-5 (cul5). Does not neddylate cul1, cul2, cul3, cul4a or cul4b. This Xenopus laevis (African clawed frog) protein is NEDD8-conjugating enzyme UBE2F (ube2f).